A 419-amino-acid chain; its full sequence is Gamma-glutamyl phosphate reductase (419 aa).

This sequence belongs to the gamma-glutamyl phosphate reductase family.

It localises to the cytoplasm. It catalyses the reaction L-glutamate 5-semialdehyde + phosphate + NADP(+) = L-glutamyl 5-phosphate + NADPH + H(+). The protein operates within amino-acid biosynthesis; L-proline biosynthesis; L-glutamate 5-semialdehyde from L-glutamate: step 2/2. Its function is as follows. Catalyzes the NADPH-dependent reduction of L-glutamate 5-phosphate into L-glutamate 5-semialdehyde and phosphate. The product spontaneously undergoes cyclization to form 1-pyrroline-5-carboxylate. In Tolumonas auensis (strain DSM 9187 / NBRC 110442 / TA 4), this protein is Gamma-glutamyl phosphate reductase.